The sequence spans 483 residues: FAD-linked oxidoreductase easE (483 aa).

The FAD-binding PCMH-type domain maps to 10–193 (QGRLPFYSAV…TEATVRVFSD (184 aa)).

Belongs to the oxygen-dependent FAD-linked oxidoreductase family. It depends on FAD as a cofactor.

Its pathway is alkaloid biosynthesis; ergot alkaloid biosynthesis. Its function is as follows. FAD-linked oxidoreductase; part of the gene cluster that mediates the biosynthesis of fungal ergot alkaloid. DmaW catalyzes the first step of ergot alkaloid biosynthesis by condensing dimethylallyl diphosphate (DMAP) and tryptophan to form 4-dimethylallyl-L-tryptophan. The second step is catalyzed by the methyltransferase easF that methylates 4-dimethylallyl-L-tryptophan in the presence of S-adenosyl-L-methionine, resulting in the formation of 4-dimethylallyl-L-abrine. The catalase easC and the FAD-dependent oxidoreductase easE then transform 4-dimethylallyl-L-abrine to chanoclavine-I which is further oxidized by easD in the presence of NAD(+), resulting in the formation of chanoclavine-I aldehyde. Agroclavine dehydrogenase easG then mediates the conversion of chanoclavine-I aldehyde to agroclavine via a non-enzymatic adduct reaction: the substrate is an iminium intermediate that is formed spontaneously from chanoclavine-I aldehyde in the presence of glutathione. The presence of easA is not required to complete this reaction. Further conversion of agroclavine to paspalic acid is a two-step process involving oxidation of agroclavine to elymoclavine and of elymoclavine to paspalic acid, the second step being performed by the elymoclavine oxidase cloA. Paspalic acid is then further converted to D-lysergic acid. Ergopeptines are assembled from D-lysergic acid and three different amino acids by the D-lysergyl-peptide-synthetases composed each of a monomudular and a trimodular nonribosomal peptide synthetase subunit. LpsB and lpsC encode the monomodular subunits responsible for D-lysergic acid activation and incorporation into the ergopeptine backbone. LpsA1 and A2 subunits encode the trimodular nonribosomal peptide synthetase assembling the tripeptide portion of ergopeptines. LpsA1 is responsible for formation of the major ergopeptine, ergotamine, and lpsA2 for alpha-ergocryptine, the minor ergopeptine of the total alkaloid mixture elaborated by C.purpurea. D-lysergyl-tripeptides are assembled by the nonribosomal peptide synthetases and released as N-(D-lysergyl-aminoacyl)-lactams. Cyclolization of the D-lysergyl-tripeptides is performed by the Fe(2+)/2-ketoglutarate-dependent dioxygenase easH which introduces a hydroxyl group into N-(D-lysergyl-aminoacyl)-lactam at alpha-C of the aminoacyl residue followed by spontaneous condensation with the terminal lactam carbonyl group. In Claviceps purpurea (strain 20.1) (Ergot fungus), this protein is FAD-linked oxidoreductase easE.